The following is a 217-amino-acid chain: Monomethylamine corrinoid protein 1 (217 aa).

Residues Met1–Glu91 form the B12-binding N-terminal domain. Positions Ala93–Lys217 constitute a B12-binding domain. His106 serves as a coordination point for methylcob(III)alamin.

As to quaternary structure, can form a complex with MtmB.

It functions in the pathway one-carbon metabolism; methanogenesis from methylamine. Functionally, acts as a methyl group carrier between MtmB and MtbA. This is Monomethylamine corrinoid protein 1 (mtmC1) from Methanosarcina barkeri.